The primary structure comprises 477 residues: Ribulose bisphosphate carboxylase large chain (477 aa).

A propeptide spanning residues 1–2 is cleaved from the precursor; the sequence is MS. N-acetylproline is present on Pro3. At Lys14 the chain carries N6,N6,N6-trimethyllysine. Substrate is bound at residue Thr173. Catalysis depends on Lys175, which acts as the Proton acceptor. Substrate is bound at residue Lys177. Residues Lys201, Asp203, and Glu204 each contribute to the Mg(2+) site. Lys201 carries the N6-carboxylysine modification. His294 acts as the Proton acceptor in catalysis. Residues Arg295, His327, and Ser379 each coordinate substrate.

It belongs to the RuBisCO large chain family. Type I subfamily. Heterohexadecamer of 8 large chains and 8 small chains; disulfide-linked. The disulfide link is formed within the large subunit homodimers. Requires Mg(2+) as cofactor. Post-translationally, the disulfide bond which can form in the large chain dimeric partners within the hexadecamer appears to be associated with oxidative stress and protein turnover.

The protein resides in the plastid. The protein localises to the chloroplast. It carries out the reaction 2 (2R)-3-phosphoglycerate + 2 H(+) = D-ribulose 1,5-bisphosphate + CO2 + H2O. The catalysed reaction is D-ribulose 1,5-bisphosphate + O2 = 2-phosphoglycolate + (2R)-3-phosphoglycerate + 2 H(+). In terms of biological role, ruBisCO catalyzes two reactions: the carboxylation of D-ribulose 1,5-bisphosphate, the primary event in carbon dioxide fixation, as well as the oxidative fragmentation of the pentose substrate in the photorespiration process. Both reactions occur simultaneously and in competition at the same active site. The protein is Ribulose bisphosphate carboxylase large chain of Gerbera jamesonii (Transvaal daisy).